A 245-amino-acid polypeptide reads, in one-letter code: MDEKLLKTIAESKYLVALTGAGVSAESGIPTFRGKDGLWNRYRPEELANPQAFAKDPEKVWKWYAWRMEKVFNAQPNKAHQAFAELERLGVLKCLITQNVDDLHERAGSRNVIHLHGSLRVVRCTSCNNSFEVESAPKIPPLPKCDKCGSLLRPGVVWFGEMLPPDVLDRAMREVERADVIIVAGTSAVVQPAASLPLIVKQRGGAIIEINPDETPLTPIADYSLRGKAGEVMDELVRHVRKALS.

The region spanning 1-243 (MDEKLLKTIA…DELVRHVRKA (243 aa)) is the Deacetylase sirtuin-type domain. 20-39 (GAGVSAESGIPTFRGKDGLW) serves as a coordination point for NAD(+). Residues Tyr-64 and Arg-67 each coordinate substrate. An NAD(+)-binding site is contributed by 98–101 (QNVD). Catalysis depends on His-116, which acts as the Proton acceptor. Residues Cys-124, Cys-127, Cys-145, and Cys-148 each coordinate Zn(2+). Residues 185–187 (GTS), 211–213 (NPD), and Ala-229 each bind NAD(+).

It belongs to the sirtuin family. Class III subfamily. The cofactor is Zn(2+).

The protein localises to the cytoplasm. It catalyses the reaction N(6)-acetyl-L-lysyl-[protein] + NAD(+) + H2O = 2''-O-acetyl-ADP-D-ribose + nicotinamide + L-lysyl-[protein]. The catalysed reaction is N(6)-succinyl-L-lysyl-[protein] + NAD(+) + H2O = 2''-O-succinyl-ADP-D-ribose + nicotinamide + L-lysyl-[protein]. In terms of biological role, NAD-dependent lysine deacetylase and desuccinylase that specifically removes acetyl and succinyl groups on target proteins. Modulates the activities of several proteins which are inactive in their acylated form. Deacetylates the N-terminal lysine residue of Alba, the major archaeal chromatin protein and that, in turn, increases Alba's DNA binding affinity, thereby repressing transcription. This is NAD-dependent protein deacylase 1 from Archaeoglobus fulgidus (strain ATCC 49558 / DSM 4304 / JCM 9628 / NBRC 100126 / VC-16).